Here is a 443-residue protein sequence, read N- to C-terminus: Protoheme IX farnesyltransferase, mitochondrial (443 aa).

The interval 68-113 (LSQRVKPKPEPPASPFLEHTSSGQARADEDELPSFPAPSRPLSRKP) is disordered. 7 helical membrane passes run 174–194 (AGFALAPGPFDWSCFLLTSLG), 230–250 (ISPLLAVSFATCCAVPGVALL), 252–272 (WGVNPLTGALGVFNIFLYTCC), 286–306 (VGAVVGAIPPVMGWTAATGSL), 308–328 (AGALLLGGILYSWQFPHFNAL), 363–383 (LIALSTAAPVLDITTWVFPVI), and 410–430 (LFFCSLWHLPLLLLLMLTCKQ).

Belongs to the UbiA prenyltransferase family.

The protein resides in the mitochondrion membrane. It catalyses the reaction heme b + (2E,6E)-farnesyl diphosphate + H2O = Fe(II)-heme o + diphosphate. In terms of biological role, converts protoheme IX and farnesyl diphosphate to heme O. This is Protoheme IX farnesyltransferase, mitochondrial (Cox10) from Mus musculus (Mouse).